We begin with the raw amino-acid sequence, 522 residues long: F-box only protein 7 (522 aa).

The ubiquitin-like stretch occupies residues 1-88; it reads MRLRVRLLKR…QDDIPAPNIP (88 aa). Residues 85–144 form a disordered region; sequence PNIPSSTDSEHSSLQNNEQPSLATSSNQTSMQDEQPSDSFQGQAAQSGVWNDDSMLGPSQ. Residues 87–133 show a composition bias toward polar residues; it reads IPSSTDSEHSSLQNNEQPSLATSSNQTSMQDEQPSDSFQGQAAQSGV. The segment at 92 to 129 is important for interaction with PINK1; that stretch reads DSEHSSLQNNEQPSLATSSNQTSMQDEQPSDSFQGQAA. The important for interaction with CDK6 stretch occupies residues 129–169; the sequence is AQSGVWNDDSMLGPSQNFEAESIQDNAHMAEGTGFYPSEPM. The segment at 180 to 324 is important for dimerization and interaction with PSMF1; it reads PHSLETLYQS…PLLAFTRQAL (145 aa). The F-box domain maps to 329–375; that stretch reads VFGLVVLPLELKLRIFRLLDVRSVLSLSAVCRDLFTASNDPLLWRFL. Residues 381 to 522 are important for interaction with CDK6; sequence RDNTVRVQDT…RPTDGRLSFM (142 aa). Omega-N-methylarginine is present on residues R432 and R451. An RFDP motif motif is present at residues 481–484; it reads RFDP. The disordered stretch occupies residues 483 to 522; it reads DPVGPLPGPNPILPGRGGPNDRFPFRPSRGRPTDGRLSFM. At R518 the chain carries Asymmetric dimethylarginine.

In terms of assembly, part of the SCF (SKP1-CUL1-F-box) E3 ubiquitin-protein ligase complex SCF(FBXO7) formed of CUL1, SKP1, RBX1 and FBXO7. Interacts via its C-terminal proline-rich region with DLGAP5. Interacts with BIRC2. Interacts with CDK6 and promotes its interaction with D-type cyclin. Interacts with PSMF1. Interacts (via the N-terminal Ubl domain) with PRKN. Interact (via N-terminal region) with PINK1. As to quaternary structure, interact (via N-terminal region) with PINK1.

It is found in the cytoplasm. The protein localises to the nucleus. The protein resides in the mitochondrion. Its subcellular location is the cytosol. Its pathway is protein modification; protein ubiquitination. In terms of biological role, substrate recognition component of a SCF (SKP1-CUL1-F-box protein) E3 ubiquitin-protein ligase complex which mediates the ubiquitination and subsequent proteasomal degradation of target proteins and plays a role in several biological processes such as cell cycle, cell proliferation, or maintenance of chromosome stability. Recognizes and ubiquitinates BIRC2 and the cell cycle regulator DLGAP5. Plays a role downstream of PINK1 in the clearance of damaged mitochondria via selective autophagy (mitophagy) by targeting PRKN to dysfunctional depolarized mitochondria. Promotes MFN1 ubiquitination. Mediates the ubiquitination and proteasomal degradation of UXT isoform 2, thereby impairing the NF-kappa-B signaling pathway. Inhibits NF-kappa-B pathway also by promoting the ubiquitination of TRAF2. Affects the assembly state and activity of the proteasome in the cells including neurons by ubiquitinating the proteasomal subunit PSMA2 via 'Lys-63'-linked polyubiquitin chains. Promotes 'Lys-48'-linked polyubiquitination SIRT7, leading to the hydrogen peroxide-induced cell death. This Homo sapiens (Human) protein is F-box only protein 7 (FBXO7).